A 334-amino-acid polypeptide reads, in one-letter code: Oligopeptide transport ATP-binding protein OppF (334 aa).

Residues 12–265 (LEIADLKVHF…PLHPYTRALM (254 aa)) form the ABC transporter domain. 57-64 (GESGCGKS) provides a ligand contact to ATP.

Belongs to the ABC transporter superfamily. As to quaternary structure, the complex is composed of two ATP-binding proteins (OppD and OppF), two transmembrane proteins (OppB and OppC) and a solute-binding protein (OppA or MppA).

The protein resides in the cell inner membrane. The catalysed reaction is a [peptide](out) + ATP + H2O = a [peptide](in) + ADP + phosphate + H(+). It catalyses the reaction L-alanyl-gamma-D-glutamyl-meso-2,6-diaminopimelate(out) + ATP + H2O = L-alanyl-gamma-D-glutamyl-meso-2,6-diaminopimelate(in) + ADP + phosphate + H(+). Functionally, part of the ABC transporter complex OppABCDF involved in the uptake of oligopeptides and of the ABC transporter complex MppA-OppBCDF involved in the uptake of the cell wall murein tripeptide L-alanyl-gamma-D-glutamyl-meso-diaminopimelate. Probably responsible for energy coupling to the transport system. Plays an important nutritional role and is involved in the recycling of cell wall peptides. This chain is Oligopeptide transport ATP-binding protein OppF (oppF), found in Escherichia coli (strain K12).